The primary structure comprises 440 residues: Proline--tRNA ligase (440 aa).

This sequence belongs to the class-II aminoacyl-tRNA synthetase family. ProS type 2 subfamily. As to quaternary structure, homodimer.

Its subcellular location is the cytoplasm. The catalysed reaction is tRNA(Pro) + L-proline + ATP = L-prolyl-tRNA(Pro) + AMP + diphosphate. In terms of biological role, catalyzes the attachment of proline to tRNA(Pro) in a two-step reaction: proline is first activated by ATP to form Pro-AMP and then transferred to the acceptor end of tRNA(Pro). In Azorhizobium caulinodans (strain ATCC 43989 / DSM 5975 / JCM 20966 / LMG 6465 / NBRC 14845 / NCIMB 13405 / ORS 571), this protein is Proline--tRNA ligase.